A 182-amino-acid chain; its full sequence is NAD(P)H-quinone oxidoreductase subunit I, chloroplastic (182 aa).

4Fe-4S ferredoxin-type domains are found at residues 52–81 (GRIH…VDWE) and 92–121 (KSYS…MTEE). The [4Fe-4S] cluster site is built by cysteine 61, cysteine 64, cysteine 67, cysteine 71, cysteine 101, cysteine 104, cysteine 107, and cysteine 111.

It belongs to the complex I 23 kDa subunit family. In terms of assembly, NDH is composed of at least 16 different subunits, 5 of which are encoded in the nucleus. It depends on [4Fe-4S] cluster as a cofactor.

The protein resides in the plastid. The protein localises to the chloroplast thylakoid membrane. It carries out the reaction a plastoquinone + NADH + (n+1) H(+)(in) = a plastoquinol + NAD(+) + n H(+)(out). It catalyses the reaction a plastoquinone + NADPH + (n+1) H(+)(in) = a plastoquinol + NADP(+) + n H(+)(out). In terms of biological role, NDH shuttles electrons from NAD(P)H:plastoquinone, via FMN and iron-sulfur (Fe-S) centers, to quinones in the photosynthetic chain and possibly in a chloroplast respiratory chain. The immediate electron acceptor for the enzyme in this species is believed to be plastoquinone. Couples the redox reaction to proton translocation, and thus conserves the redox energy in a proton gradient. This Chaetosphaeridium globosum (Charophycean green alga) protein is NAD(P)H-quinone oxidoreductase subunit I, chloroplastic.